We begin with the raw amino-acid sequence, 504 residues long: Deoxyguanosinetriphosphate triphosphohydrolase (504 aa).

The HD domain occupies 66-273 (RLTHSLEVQQ…MEAADDISYC (208 aa)).

It belongs to the dGTPase family. Type 1 subfamily. In terms of assembly, homotetramer. Mg(2+) is required as a cofactor.

The enzyme catalyses dGTP + H2O = 2'-deoxyguanosine + triphosphate + H(+). In terms of biological role, dGTPase preferentially hydrolyzes dGTP over the other canonical NTPs. This is Deoxyguanosinetriphosphate triphosphohydrolase from Klebsiella pneumoniae (strain 342).